The following is a 661-amino-acid chain: Transcription factor ccg-8 (661 aa).

Residues 1–11 (MEHHHHHRHMH) show a composition bias toward basic residues. 4 disordered regions span residues 1–69 (MEHH…QADN), 107–243 (SASS…LDDP), 255–279 (LKTD…DQNQ), and 354–398 (RTKS…RRTS). 2 stretches are compositionally biased toward low complexity: residues 23 to 43 (HQQY…QHQQ) and 107 to 140 (SASS…SSNR). Residues 173 to 187 (DHSLPSIASLNVGSS) are compositionally biased toward polar residues. Residues 192–203 (QPTPTPQPPPKF) are compositionally biased toward pro residues. Residues 357–366 (SSSDTRESGQ) show a composition bias toward basic and acidic residues.

In terms of biological role, transcription factor that plays a pivotal role in azole adaptive responses by regulating the drug accumulation in the cells. Affects the transcriptional responses to ketoconazole of many genes, including the target gene (erg11), an azole transporter gene (cdr4), a hexose transporter gene (hxt13), a stress response gene (kts-1), two transcription factor genes (named kts-2 and fsd-1/ndt80). Also regulates phospholipid synthesis that is not involved in azole resistance. This chain is Transcription factor ccg-8, found in Neurospora crassa (strain ATCC 24698 / 74-OR23-1A / CBS 708.71 / DSM 1257 / FGSC 987).